The chain runs to 345 residues: Transcription factor MYB106 (345 aa).

2 HTH myb-type domains span residues Lys9–Leu61 and Arg62–Leu116. DNA-binding regions (H-T-H motif) lie at residues Trp37–Leu61 and Trp89–Leu112.

In terms of tissue distribution, expressed in trichomes, stems, carpels, petals and stamens.

Its subcellular location is the nucleus. Functions as a repressor of epidermal cell outgrowth and negatively regulate trichome branch formation. Acts both as a positive and a negative regulator of cellular outgrowth. Promotes both trichome expansion and branch formation. Coordinately with WIN1/SHN1, participates in the regulation of cuticle biosynthesis and wax accumulation in reproductive organs and trichomes. Functions in cuticle nanoridge formation in petals and stamens, and in morphogenesis of petal conical cells and trichomes. May play a role in the regulation of cuticle formation in vegetative organs. This is Transcription factor MYB106 from Arabidopsis thaliana (Mouse-ear cress).